The chain runs to 215 residues: Protein LURP-one-related 16 (215 aa).

G2 carries N-myristoyl glycine lipidation.

It belongs to the LOR family.

Functionally, might be related to the phospholipid scramblase and tubby-like superfamily of membrane tethered transcription factors. The protein is Protein LURP-one-related 16 of Arabidopsis thaliana (Mouse-ear cress).